A 275-amino-acid polypeptide reads, in one-letter code: NH(3)-dependent NAD(+) synthetase (275 aa).

47–54 (GISGGQDS) lines the ATP pocket. D53 provides a ligand contact to Mg(2+). Deamido-NAD(+) is bound at residue R139. An ATP-binding site is contributed by T159. E164 contributes to the Mg(2+) binding site. Positions 172 and 179 each coordinate deamido-NAD(+). Residues K188 and T210 each contribute to the ATP site. Deamido-NAD(+) is bound at residue 259-260 (HK).

This sequence belongs to the NAD synthetase family. As to quaternary structure, homodimer.

The enzyme catalyses deamido-NAD(+) + NH4(+) + ATP = AMP + diphosphate + NAD(+) + H(+). The protein operates within cofactor biosynthesis; NAD(+) biosynthesis; NAD(+) from deamido-NAD(+) (ammonia route): step 1/1. Catalyzes the ATP-dependent amidation of deamido-NAD to form NAD. Uses ammonia as a nitrogen source. This is NH(3)-dependent NAD(+) synthetase from Staphylococcus epidermidis (strain ATCC 35984 / DSM 28319 / BCRC 17069 / CCUG 31568 / BM 3577 / RP62A).